We begin with the raw amino-acid sequence, 98 residues long: UPF0473 protein LAR_0522 (98 aa).

The protein belongs to the UPF0473 family.

This chain is UPF0473 protein LAR_0522, found in Limosilactobacillus reuteri subsp. reuteri (strain JCM 1112) (Lactobacillus reuteri).